A 69-amino-acid chain; its full sequence is uncharacterized protein (69 aa).

Residues 23-46 (AENEGNRKENRRQMQSRNERGCNV) are disordered. Basic and acidic residues predominate over residues 26–44 (EGNRKENRRQMQSRNERGC).

This is an uncharacterized protein from Homo sapiens (Human).